The chain runs to 471 residues: Tryptophanase (471 aa).

Lys256 is subject to N6-(pyridoxal phosphate)lysine.

This sequence belongs to the beta-eliminating lyase family. Homotetramer. The cofactor is pyridoxal 5'-phosphate.

It carries out the reaction L-tryptophan + H2O = indole + pyruvate + NH4(+). It participates in amino-acid degradation; L-tryptophan degradation via pyruvate pathway; indole and pyruvate from L-tryptophan: step 1/1. In Salinibacter ruber (strain DSM 13855 / M31), this protein is Tryptophanase.